Here is a 298-residue protein sequence, read N- to C-terminus: MAFPKMRLMYICLLVLGALCLYFSMYSLNPFKEQSFVYKKDVNFLKLPDTDCRQTPPFLVLLVTSSHKQLAERMAIRQTWGKERTVKGKQLKTFFLLGTTSSAAETKEVDQESRRHGDIIQKDFLDVYYNLTLKTMMGIEWVHRFCPQAAFVMKTDSDMFINVDYLTELLLKKNRTTRFFTGFLKLNEFPIRQPFSKWFVSKSEYPWDRYPPFCSGTGYVFSGDVASQVYNVSESVPYIKLEDVFVGLCLERLNIRLEELHSQPTFFPGGLRFSVCRFRRIVACHFIKPRTLLDYWQA.

Over Met1–Arg7 the chain is Cytoplasmic. Residues Leu8–Leu28 traverse the membrane as a helical; Signal-anchor for type II membrane protein segment. Residues Asn29–Ala298 lie on the Lumenal side of the membrane. N-linked (GlcNAc...) asparagine glycosylation is found at Asn130, Asn174, and Asn231.

The protein belongs to the glycosyltransferase 31 family.

The protein resides in the golgi apparatus membrane. The enzyme catalyses a globoside Gb4Cer (d18:1(4E)) + UDP-alpha-D-galactose = a globoside GalGb4Cer (d18:1(4E)) + UDP + H(+). Its pathway is protein modification; protein glycosylation. Functionally, catalyzes the transfer of Gal to GlcNAc-based acceptors with a preference for the core3 O-linked glycan GlcNAc(beta1,3)GalNAc structure. Can use glycolipid LC3Cer as an efficient acceptor. The polypeptide is Beta-1,3-galactosyltransferase 5 (B3GALT5) (Gorilla gorilla gorilla (Western lowland gorilla)).